The chain runs to 85 residues: Large ribosomal subunit protein bL27 (85 aa).

The disordered stretch occupies residues 1 to 20 (MATKKAGGSTRNGRDSEAKR).

The protein belongs to the bacterial ribosomal protein bL27 family.

This is Large ribosomal subunit protein bL27 from Glaesserella parasuis serovar 5 (strain SH0165) (Haemophilus parasuis).